The sequence spans 124 residues: Holo-[acyl-carrier-protein] synthase (124 aa).

2 residues coordinate Mg(2+): aspartate 8 and glutamate 57.

This sequence belongs to the P-Pant transferase superfamily. AcpS family. Mg(2+) is required as a cofactor.

It is found in the cytoplasm. It catalyses the reaction apo-[ACP] + CoA = holo-[ACP] + adenosine 3',5'-bisphosphate + H(+). Functionally, transfers the 4'-phosphopantetheine moiety from coenzyme A to a Ser of acyl-carrier-protein. The protein is Holo-[acyl-carrier-protein] synthase of Leptospira borgpetersenii serovar Hardjo-bovis (strain JB197).